We begin with the raw amino-acid sequence, 267 residues long: MSRIGQVFAEKRSRGEKALIAYTMGGDPNLTFSLEIIKTLAAAGADLIEVGLPFSDPLADGPVIQRAGQRALAAGSGPEEVLALIAAARQELSLPLVIMSYLNPILQIGVDEFLRRAAGAGADGLIIPDLPVEEGEEIRVSAAGYGLDLIPLVAPTTGQKRLEKIVGQASGFIYCVSVTGVTGARDSLPAEVISLLQNVKKLTELPVCLGFGIGKPEQIAYIKDYCDGVIVGSALVEIIENYVQNRMEKDKVLELIATKVQTLKSVS.

Active-site proton acceptor residues include Glu-49 and Asp-60.

This sequence belongs to the TrpA family. Tetramer of two alpha and two beta chains.

The catalysed reaction is (1S,2R)-1-C-(indol-3-yl)glycerol 3-phosphate + L-serine = D-glyceraldehyde 3-phosphate + L-tryptophan + H2O. The protein operates within amino-acid biosynthesis; L-tryptophan biosynthesis; L-tryptophan from chorismate: step 5/5. Functionally, the alpha subunit is responsible for the aldol cleavage of indoleglycerol phosphate to indole and glyceraldehyde 3-phosphate. The sequence is that of Tryptophan synthase alpha chain from Carboxydothermus hydrogenoformans (strain ATCC BAA-161 / DSM 6008 / Z-2901).